A 394-amino-acid polypeptide reads, in one-letter code: Ribulose bisphosphate carboxylase large chain (394 aa).

K5 is subject to N6,N6,N6-trimethyllysine. Positions 114 and 164 each coordinate substrate. K166 (proton acceptor) is an active-site residue. K168 serves as a coordination point for substrate. Mg(2+)-binding residues include K192, D194, and E195. An N6-carboxylysine modification is found at K192. H285 functions as the Proton acceptor in the catalytic mechanism. Substrate contacts are provided by R286, H318, and S370.

The protein belongs to the RuBisCO large chain family. Type I subfamily. As to quaternary structure, heterohexadecamer of 8 large chains and 8 small chains. Mg(2+) is required as a cofactor.

It is found in the plastid. The protein resides in the chloroplast. The enzyme catalyses 2 (2R)-3-phosphoglycerate + 2 H(+) = D-ribulose 1,5-bisphosphate + CO2 + H2O. It catalyses the reaction D-ribulose 1,5-bisphosphate + O2 = 2-phosphoglycolate + (2R)-3-phosphoglycerate + 2 H(+). Its function is as follows. RuBisCO catalyzes two reactions: the carboxylation of D-ribulose 1,5-bisphosphate, the primary event in carbon dioxide fixation, as well as the oxidative fragmentation of the pentose substrate in the photorespiration process. Both reactions occur simultaneously and in competition at the same active site. The sequence is that of Ribulose bisphosphate carboxylase large chain (rbcL) from Nymphaea odorata (White water lily).